Consider the following 239-residue polypeptide: Pyridoxine 5'-phosphate synthase (239 aa).

Asparagine 7 is a 3-amino-2-oxopropyl phosphate binding site. Position 9–10 (9–10 (DH)) interacts with 1-deoxy-D-xylulose 5-phosphate. Arginine 18 lines the 3-amino-2-oxopropyl phosphate pocket. The active-site Proton acceptor is histidine 43. 1-deoxy-D-xylulose 5-phosphate contacts are provided by arginine 45 and histidine 50. Glutamate 70 (proton acceptor) is an active-site residue. Threonine 100 is a 1-deoxy-D-xylulose 5-phosphate binding site. The Proton donor role is filled by histidine 191. Residues glycine 192 and 213–214 (GH) each bind 3-amino-2-oxopropyl phosphate.

It belongs to the PNP synthase family. Homooctamer; tetramer of dimers.

It is found in the cytoplasm. The enzyme catalyses 3-amino-2-oxopropyl phosphate + 1-deoxy-D-xylulose 5-phosphate = pyridoxine 5'-phosphate + phosphate + 2 H2O + H(+). Its pathway is cofactor biosynthesis; pyridoxine 5'-phosphate biosynthesis; pyridoxine 5'-phosphate from D-erythrose 4-phosphate: step 5/5. Its function is as follows. Catalyzes the complicated ring closure reaction between the two acyclic compounds 1-deoxy-D-xylulose-5-phosphate (DXP) and 3-amino-2-oxopropyl phosphate (1-amino-acetone-3-phosphate or AAP) to form pyridoxine 5'-phosphate (PNP) and inorganic phosphate. This chain is Pyridoxine 5'-phosphate synthase, found in Geobacter metallireducens (strain ATCC 53774 / DSM 7210 / GS-15).